We begin with the raw amino-acid sequence, 484 residues long: Cobyric acid synthase (484 aa).

In terms of domain architecture, GATase cobBQ-type spans 246 to 437; sequence ALRVVVPALP…VHGLFDTPAA (192 aa). Residue Cys327 is the Nucleophile of the active site. His429 is an active-site residue.

It belongs to the CobB/CobQ family. CobQ subfamily.

The protein operates within cofactor biosynthesis; adenosylcobalamin biosynthesis. Catalyzes amidations at positions B, D, E, and G on adenosylcobyrinic A,C-diamide. NH(2) groups are provided by glutamine, and one molecule of ATP is hydrogenolyzed for each amidation. The protein is Cobyric acid synthase of Paraburkholderia phymatum (strain DSM 17167 / CIP 108236 / LMG 21445 / STM815) (Burkholderia phymatum).